Reading from the N-terminus, the 565-residue chain is uncharacterized protein (565 aa).

Transmembrane regions (helical) follow at residues 8–28 (ISFIAAMLIVIGSSIGAGIFF), 43–63 (LAIFNWLVASVAVIAMALALI), 95–115 (MTYLYLPLTFFFMPLYFICSI), 137–157 (WLIWLALALIITTYFLTIPPL), 167–187 (MVVSAVKFIPLVFVPIIGFIV), 227–247 (FTGIGAGMGSFISIAAIFFAY), 268–288 (WALFLGLLITTLFYLILAVAL), 314–334 (IVFGVVNLMIGIGVLGIINGF), 367–387 (VVGVIYCLVLSLTVQVLFTVI), 424–444 (ATWTSLFTFAFIACAIFGAIV), 460–480 (FLPAAWIAVVVNCISVFVTII), 482–502 (PFINLFLLFGYDETVAHTVLG), and 516–536 (VMLIVVLVFFAIISFLPVYVE).

This sequence to M.pneumoniae MPN_095 and MPN_096.

The protein resides in the cell membrane. This is an uncharacterized protein from Mycoplasma pneumoniae (strain ATCC 29342 / M129 / Subtype 1) (Mycoplasmoides pneumoniae).